A 265-amino-acid polypeptide reads, in one-letter code: 3-methyl-2-oxobutanoate hydroxymethyltransferase (265 aa).

Mg(2+) is bound by residues Asp-45 and Asp-84. Residues Asp-45–Ser-46, Asp-84, and Lys-114 each bind 3-methyl-2-oxobutanoate. Glu-116 lines the Mg(2+) pocket. Glu-183 acts as the Proton acceptor in catalysis.

The protein belongs to the PanB family. In terms of assembly, homodecamer; pentamer of dimers. Mg(2+) serves as cofactor.

The protein localises to the cytoplasm. It carries out the reaction 3-methyl-2-oxobutanoate + (6R)-5,10-methylene-5,6,7,8-tetrahydrofolate + H2O = 2-dehydropantoate + (6S)-5,6,7,8-tetrahydrofolate. It participates in cofactor biosynthesis; (R)-pantothenate biosynthesis; (R)-pantoate from 3-methyl-2-oxobutanoate: step 1/2. Its function is as follows. Catalyzes the reversible reaction in which hydroxymethyl group from 5,10-methylenetetrahydrofolate is transferred onto alpha-ketoisovalerate to form ketopantoate. The sequence is that of 3-methyl-2-oxobutanoate hydroxymethyltransferase from Salinibacter ruber (strain DSM 13855 / M31).